The sequence spans 159 residues: Allergen Arg r 1 (159 aa).

The first 16 residues, 1 to 16 (MALIILLVACLSVVSA), serve as a signal peptide directing secretion. 2 disulfide bridges follow: C50/C155 and C109/C134.

This sequence belongs to the calycin superfamily. Histamine-binding salivary protein family. Not glycosylated.

The protein resides in the secreted. This is Allergen Arg r 1 from Argas reflexus (European pigeon tick).